We begin with the raw amino-acid sequence, 270 residues long: ATP synthase subunit b 1 (270 aa).

Residues 2–22 form a helical membrane-spanning segment; it reads LIDWFTVIAQLINFLVLVWLL.

The protein belongs to the ATPase B chain family. In terms of assembly, F-type ATPases have 2 components, F(1) - the catalytic core - and F(0) - the membrane proton channel. F(1) has five subunits: alpha(3), beta(3), gamma(1), delta(1), epsilon(1). F(0) has three main subunits: a(1), b(2) and c(10-14). The alpha and beta chains form an alternating ring which encloses part of the gamma chain. F(1) is attached to F(0) by a central stalk formed by the gamma and epsilon chains, while a peripheral stalk is formed by the delta and b chains.

It is found in the cell inner membrane. In terms of biological role, f(1)F(0) ATP synthase produces ATP from ADP in the presence of a proton or sodium gradient. F-type ATPases consist of two structural domains, F(1) containing the extramembraneous catalytic core and F(0) containing the membrane proton channel, linked together by a central stalk and a peripheral stalk. During catalysis, ATP synthesis in the catalytic domain of F(1) is coupled via a rotary mechanism of the central stalk subunits to proton translocation. Component of the F(0) channel, it forms part of the peripheral stalk, linking F(1) to F(0). The protein is ATP synthase subunit b 1 of Marinomonas sp. (strain MWYL1).